Here is an 86-residue protein sequence, read N- to C-terminus: uncharacterized protein (86 aa).

This is an uncharacterized protein from Acidianus bottle-shaped virus (isolate Italy/Pozzuoli) (ABV).